We begin with the raw amino-acid sequence, 633 residues long: Chaperone protein HtpG (633 aa).

The interval 1–341 (MTAPHETMSF…SADLPLNVSR (341 aa)) is a; substrate-binding. Residues 342–562 (ELLQESRDVK…EGDMSGYLQR (221 aa)) are b. Residues 563–633 (LLKQAGQKAP…YVQRVNKLLA (71 aa)) form a c region.

Belongs to the heat shock protein 90 family. In terms of assembly, homodimer.

The protein resides in the cytoplasm. Molecular chaperone. Has ATPase activity. In Cupriavidus necator (strain ATCC 17699 / DSM 428 / KCTC 22496 / NCIMB 10442 / H16 / Stanier 337) (Ralstonia eutropha), this protein is Chaperone protein HtpG.